The following is a 1284-amino-acid chain: Kinesin-like protein KIN-4C (1284 aa).

One can recognise a Kinesin motor domain in the interval 12 to 364; sequence SVKVVVNIRP…LKYANRARNI (353 aa). 91-98 provides a ligand contact to ATP; the sequence is GQTGSGKT. Coiled coils occupy residues 407–445, 561–711, and 911–950; these read SAAL…EQLA, RDHS…QFRS, and MCKE…NMLL. Disordered regions lie at residues 1040–1070 and 1158–1284; these read RRQT…SQEK and MSEK…NHLR. Polar residues predominate over residues 1043–1070; it reads TVSSHLNPNPGSGTTQKSAKSEMASQEK. Basic and acidic residues-rich tracts occupy residues 1158–1172 and 1275–1284; these read MSEK…RKPL and NANEKENHLR.

Belongs to the TRAFAC class myosin-kinesin ATPase superfamily. Kinesin family. KIN-4 subfamily. Homodimer.

Its function is as follows. Microtubule-dependent motor protein involved in the control of the oriented deposition of cellulose microfibrils. This chain is Kinesin-like protein KIN-4C, found in Oryza sativa subsp. japonica (Rice).